The following is a 1068-amino-acid chain: Ubiquitin-protein ligase E3B (1068 aa).

The residue at position 1 (methionine 1) is an N-acetylmethionine. Positions 29–58 constitute an IQ domain; it reads RERAAVVIQAHVRSFLCRSRLQRDIRREID. Serine 419 carries the phosphoserine modification. The region spanning 702–1068 is the HECT domain; sequence SQHAMKGVIR…ISMNTGFELS (367 aa). Residue cysteine 1036 is the Glycyl thioester intermediate of the active site.

In terms of tissue distribution, widely expressed.

It is found in the postsynaptic density. The catalysed reaction is S-ubiquitinyl-[E2 ubiquitin-conjugating enzyme]-L-cysteine + [acceptor protein]-L-lysine = [E2 ubiquitin-conjugating enzyme]-L-cysteine + N(6)-ubiquitinyl-[acceptor protein]-L-lysine.. The protein operates within protein modification; protein ubiquitination. Its function is as follows. E3 ubiquitin-protein ligase which accepts ubiquitin from an E2 ubiquitin-conjugating enzyme in the form of a thioester and then directly transfers the ubiquitin to targeted substrates. Ubiquitinates BCKDK and targets it for degradation, thereby regulating various metabolic processes. Involved in the positive regulation of neurite branching in hippocampal neurons and the control of neuronal spine number and morphology, through the ubiquitination of PPP3CC. In Homo sapiens (Human), this protein is Ubiquitin-protein ligase E3B (UBE3B).